A 246-amino-acid chain; its full sequence is 1-(5-phosphoribosyl)-5-[(5-phosphoribosylamino)methylideneamino] imidazole-4-carboxamide isomerase (246 aa).

Aspartate 8 functions as the Proton acceptor in the catalytic mechanism. The Proton donor role is filled by aspartate 130.

The protein belongs to the HisA/HisF family.

The protein localises to the cytoplasm. The catalysed reaction is 1-(5-phospho-beta-D-ribosyl)-5-[(5-phospho-beta-D-ribosylamino)methylideneamino]imidazole-4-carboxamide = 5-[(5-phospho-1-deoxy-D-ribulos-1-ylimino)methylamino]-1-(5-phospho-beta-D-ribosyl)imidazole-4-carboxamide. Its pathway is amino-acid biosynthesis; L-histidine biosynthesis; L-histidine from 5-phospho-alpha-D-ribose 1-diphosphate: step 4/9. The protein is 1-(5-phosphoribosyl)-5-[(5-phosphoribosylamino)methylideneamino] imidazole-4-carboxamide isomerase of Shigella sonnei (strain Ss046).